The primary structure comprises 927 residues: Tubulin monoglycylase TTLL3 (927 aa).

The span at Arg-35 to Ser-47 shows a compositional bias: polar residues. Disordered regions lie at residues Arg-35 to Val-113 and His-194 to Glu-227. Residues Asp-216–Asn-226 show a composition bias toward acidic residues. The 358-residue stretch at Val-345–Thr-702 folds into the TTL domain. ATP contacts are provided by residues Lys-476, Arg-482–Gly-483, Gln-514–Ile-517, Lys-527–Asp-529, and Cys-571–Asn-572. An a protein-binding site is contributed by Arg-482. Mg(2+)-binding residues include Asp-649, Glu-662, and Asn-664. Glu-662 is an ATP binding site. Disordered regions lie at residues Val-735 to Gly-799 and Glu-897 to Thr-927. Positions Leu-752 to Arg-769 are enriched in polar residues. Residues Ala-776–Glu-788 are compositionally biased toward basic and acidic residues. Positions Leu-916–Thr-927 are enriched in polar residues.

Mg(2+) is required as a cofactor. In terms of tissue distribution, highly expressed in brain and testis. Expressed in heart, kidney, liver, lung, muscle, spleen, trachea and colon. Expressed in sperm flagellum. In the brain, specifically expressed in ependymal cilia.

Its subcellular location is the cytoplasm. It is found in the cytoskeleton. It localises to the cell projection. The protein resides in the cilium. The protein localises to the cilium axoneme. Its subcellular location is the flagellum axoneme. It carries out the reaction L-glutamyl-[protein] + glycine + ATP = glycyl-L-glutamyl-[protein] + ADP + phosphate + H(+). Monoglycylase which modifies alpha- and beta-tubulin, adding a single glycine on the gamma-carboxyl groups of specific glutamate residues to generate monoglycine side chains within the C-terminal tail of tubulin. Not involved in elongation step of the polyglycylation reaction. Preferentially glycylates a beta-tail peptide over the alpha-tail, although shifts its preference toward alpha-tail as beta-tail glutamylation increases. Competes with polyglutamylases for modification site on beta-tubulin substrate, thereby creating an anticorrelation between glycylation and glutamylation reactions. Together with TTLL8, mediates microtubule glycylation of primary and motile cilia, which is essential for their stability and maintenance. Involved in microtubule glycylation of primary cilia in colon which controls cell proliferation of epithelial cells and plays an essential role in colon cancer development. Together with TTLL8, glycylates sperm flagella which regulates axonemal dynein motor activity, thereby controlling flagellar beat, directional sperm swimming and male fertility. The polypeptide is Tubulin monoglycylase TTLL3 (Mus musculus (Mouse)).